Here is an 892-residue protein sequence, read N- to C-terminus: MLPVEVPLSQLGPPVLLLQLLLPPTSAFFPNIWSLLAAPGSITHQDLTEEAALNVTLELFLEQPPPGRPHLHLEDYRGRTLLADDIFAAYFGSGFSSRRFRAALGEVSRANAAQDFLPASKSNPDLHFDAERLVQGRTRLEGALRETLVAARALEYTLARQRLGAALHALQDFYSHSNWVELGERQPHPHLLWPRRELWSLAQVGDPTCSDCEGLSCPGNMMNLTMLTSGYFGTNPPKPPGKCSHGGRFDQSSSQPPRGGINKDSTSPSFSPHHRLHLQAAEVALLASIEALSLLRSRLGTRGFSRLLDITPASSLSFVLDTTGSMGEEINAAKIQARRIVEQRQGSPMEPVSYILVPFHDPGFGPVFTTSDPDSFWQKLTEIHALGGGDEPEMCLSALELALLHTPPLSDIFVFTDASPKDAFLTNRVESLTRERRCRVTFLVTEDPSRAQGRGRREALSPSRFEPYEAIALASGGEVIFTKDQHIRDVAAVVGESMAGLVTLPLEPPIFTPGEPCVFAVDSLLSKVTVRMHGDISGFWIKSPAGLSQGPEEGIGPLGHTRRFGQFWTVTMTDPPQTGSWEIQVAAEGTPRVRVQAQTSLDFLFHFGISAEDGPHPGLYPLTQPVAGLQTQLLVEVTGLVSRQKLGDGQPQFSHAVLRRVSEGTHLGRVSLEPVGPPERGLLAASLPPTLLSVSVPFSLELVGQDVGGQCLRRSAPQPCSVAPVLLELSGPPDFLTPGSKAPLSLRVASFSGPQDVDLRSSVNPSFSLTSNLSRARLGLNESAWGCLWLEVPDSAAPDTVVTVTVTVTAVGQGASQVPPTHAFLQLLVLAQSSKDQLEDPTHSAAPVLPPTTPALLPSTLVTRGRAGRGTTGKTWWGTVGGVLFLLGCTSW.

The N-terminal stretch at M1–A27 is a signal peptide. N54 carries N-linked (GlcNAc...) asparagine glycosylation. A disordered region spans residues Y231 to P272. The 183-residue stretch at A313–G495 folds into the VWFA domain.

It localises to the secreted. The chain is von Willebrand factor A domain-containing protein 7 (Vwa7) from Rattus norvegicus (Rat).